The following is a 392-amino-acid chain: Early estrogen-induced gene 1 protein (392 aa).

Residues 2 to 145 enclose the C2 NT-type domain; sequence AFLMKKKKFK…ILKVTIGMFL (144 aa). The tract at residues 129–138 is required for interaction with TNFRSF11A/RANK; that stretch reads NTRQDNSILK. Positions 173–324 are disordered; that stretch reads LTCKGGGTSS…RKKDSVESHP (152 aa). A compositionally biased stretch (low complexity) spans 183–194; it reads GGSSSTNSLTGS. Over residues 228 to 255 the composition is skewed to polar residues; the sequence is SRNSSYASQQSKLSGYSTEHSRSSSLSD. Residues 262–273 show a composition bias toward low complexity; that stretch reads TSTSSSASGGLS. Composition is skewed to basic and acidic residues over residues 281-300 and 307-324; these read GMEREHRPSEKPPRPPEKPP and HLSDRSFRRKKDSVESHP.

It belongs to the EEIG family. In terms of assembly, part of a complex composed of EEIG1, TNFRSF11A/RANK, PLCG2, GAB2, TEC and BTK; complex formation increases in the presence of TNFSF11/RANKL. Interacts with PRDM1/BLIMP1; following TNFSF11/RANKL stimulation in bone marrow-derived macrophages, the interaction promotes the binding of PRDM1/BLIMP1 to the gene promoter of IRF8. Interacts (via N-terminus) with TNFRSF11A/RANK (via cytoplasmic domain); when in the presence of TNFSF11/RANKL. Expressed during TNFSF11/RANKL-induced differentiation of bone marrow-derived macrophages to osteoclasts.

It is found in the nucleus. It localises to the cytoplasm. Its subcellular location is the membrane raft. In terms of biological role, key component of TNFSF11/RANKL- and TNF-induced osteoclastogenesis pathways, thereby mediates bone resorption in pathological bone loss conditions. Required for TNFSF11/RANKL-induced osteoclastogenesis via its interaction with TNFRSF11A/RANK, thereby facilitates the downsteam transcription of NFATC1 and activation of PLCG2. Facilitates recruitment of the transcriptional repressor PRDM1/BLIMP1 to the promoter of the anti-osteoclastogenesis gene IRF8, thereby resulting in transcription of osteoclast differentiation factors. May play a role in estrogen action. This Mus musculus (Mouse) protein is Early estrogen-induced gene 1 protein (Eeig1).